Consider the following 120-residue polypeptide: Large ribosomal subunit protein bL19 (120 aa).

It belongs to the bacterial ribosomal protein bL19 family.

In terms of biological role, this protein is located at the 30S-50S ribosomal subunit interface and may play a role in the structure and function of the aminoacyl-tRNA binding site. The polypeptide is Large ribosomal subunit protein bL19 (Chlorobium luteolum (strain DSM 273 / BCRC 81028 / 2530) (Pelodictyon luteolum)).